A 4328-amino-acid polypeptide reads, in one-letter code: Cadherin-4 (4328 aa).

The first 23 residues, 1 to 23 (MKKHRVFHLFLLIFCKAISLVTT), serve as a signal peptide directing secretion. Residues 24 to 4072 (SSSTEQIFEF…TVLEFLLKAE (4049 aa)) are Extracellular-facing. N-linked (GlcNAc...) asparagine glycosylation is found at Asn39 and Asn56. Cadherin domains are found at residues 108-153 (PLNR…SPVF) and 156-275 (GEQG…NPNI). N-linked (GlcNAc...) asparagine glycosylation is found at Asn196, Asn330, Asn339, Asn365, Asn431, Asn452, and Asn584. 11 consecutive Cadherin domains span residues 384-492 (DNEK…APVF), 507-608 (PGDV…SPVF), 609-720 (SSFP…SPQF), 721-826 (DEVS…PPKC), 827-934 (VVQH…AIEF), 935-1051 (DDVA…KPMY), 1047-1156 (KKPM…SPTF), 1175-1262 (RIFA…PPEI), 1265-1363 (KKSD…RPKF), 1364-1467 (SASH…SPYF), and 1476-1570 (VDES…APET). Residues Asn811 and Asn899 are each glycosylated (N-linked (GlcNAc...) asparagine). The Cell attachment site signature appears at 1090–1092 (RGD). The N-linked (GlcNAc...) asparagine glycan is linked to Asn1192. Residues 1246–1267 (NSAGQKPRKSKNSPPEISGKKS) form a disordered region. Asn1335 is a glycosylation site (N-linked (GlcNAc...) asparagine). Residue Asn1610 is glycosylated (N-linked (GlcNAc...) asparagine). Residues 1671–1784 (RRQVYRGTIR…IDENDEPPRF (114 aa)) form the Cadherin 14 domain. Asn1895 carries N-linked (GlcNAc...) asparagine glycosylation. Positions 1917–1984 (FSIVNPHEAF…ENINDETPIF (68 aa)) constitute a Cadherin 15 domain. N-linked (GlcNAc...) asparagine glycosylation is found at Asn2059, Asn2150, Asn2216, Asn2367, Asn2413, Asn2440, and Asn2535. Cadherin domains follow at residues 2187-2285 (EKLK…MPEF) and 2286-2397 (IRSD…PPRF). 9 consecutive Cadherin domains span residues 2429-2505 (LQFS…PPFF), 2506-2608 (VLPF…VPRF), 2609-2712 (SNSH…APAF), 2719-2813 (FTIS…PPQF), 2828-2915 (SPIL…CPEA), 2913-3011 (PEAN…RPKI), 3012-3113 (IEKL…APTF), 3114-3216 (EKST…APKF), and 3217-3326 (EKEK…APTF). 5 N-linked (GlcNAc...) asparagine glycosylation sites follow: Asn2844, Asn2916, Asn2941, Asn3083, and Asn3143. N-linked (GlcNAc...) asparagine glycosylation occurs at Asn3330. 2 Cadherin domains span residues 3335-3428 (VQEG…APTM) and 3429-3554 (KPMK…VDEF). Asn3512 is a glycosylation site (N-linked (GlcNAc...) asparagine). The 39-residue stretch at 3706 to 3744 (ETNQCAKSPCEQWQLCIPSVHNSTYECVCPLGMEGDKCS) folds into the EGF-like 1 domain. 10 cysteine pairs are disulfide-bonded: Cys3710-Cys3721, Cys3715-Cys3732, Cys3734-Cys3743, Cys3898-Cys3925, Cys3933-Cys3944, Cys3938-Cys3954, Cys3956-Cys3965, Cys3972-Cys3983, Cys3977-Cys3992, and Cys3994-Cys4003. Asn3727 carries N-linked (GlcNAc...) asparagine glycosylation. A Laminin G-like domain is found at 3757–3925 (EAELSVGGDG…MKLFGAQPGC (169 aa)). 2 consecutive EGF-like domains span residues 3929-3966 (TSSP…NVCE) and 3968-4004 (DLEP…KHCE). Asn4043 carries N-linked (GlcNAc...) asparagine glycosylation. A helical membrane pass occupies residues 4073–4093 (IVIVILGVLLLLLVFCLTFIT). At 4094-4328 (WKCCKKNRDP…IDEEVNIHIS (235 aa)) the chain is on the cytoplasmic side. 2 disordered regions span residues 4143-4215 (TSSV…SSLR) and 4268-4311 (NFER…PISL). A compositionally biased stretch (basic and acidic residues) spans 4178-4196 (TRRDPLPSDKFRRVDETAN). Positions 4207 to 4209 (RGD) match the Cell attachment site motif.

In larvae and adult, it is expressed in various tissues including pharyngeal muscle, hypodermis and gonad. In the nervous system it is expressed in sensory neurons and motor neurons in the ventral cord.

The protein resides in the cell membrane. Potential calcium-dependent cell-adhesion protein that controls axon guidance in the ventral cord. In Caenorhabditis elegans, this protein is Cadherin-4.